Reading from the N-terminus, the 139-residue chain is Putative flagella-related protein F (139 aa).

A signal peptide spans 1-18 (MGFSSVVGATVMIIALLV). The residue at position 19 (C19) is an N-acetylcysteine. A lipid anchor (S-archaeol cysteine) is attached at C19.

The protein to M.voltae FlaF.

The protein localises to the archaeal flagellum. It localises to the membrane. The protein is Putative flagella-related protein F (flaF) of Methanocaldococcus jannaschii (strain ATCC 43067 / DSM 2661 / JAL-1 / JCM 10045 / NBRC 100440) (Methanococcus jannaschii).